Reading from the N-terminus, the 334-residue chain is Fructose-1,6-bisphosphatase class 1 (334 aa).

Positions 90, 113, 115, and 116 each coordinate Mg(2+). Substrate-binding positions include 116 to 119, asparagine 209, tyrosine 242, and lysine 272; that span reads DGSS. Mg(2+) is bound at residue glutamate 278.

This sequence belongs to the FBPase class 1 family. As to quaternary structure, homotetramer. It depends on Mg(2+) as a cofactor.

The protein resides in the cytoplasm. The catalysed reaction is beta-D-fructose 1,6-bisphosphate + H2O = beta-D-fructose 6-phosphate + phosphate. It functions in the pathway carbohydrate biosynthesis; gluconeogenesis. This is Fructose-1,6-bisphosphatase class 1 from Actinobacillus succinogenes (strain ATCC 55618 / DSM 22257 / CCUG 43843 / 130Z).